The sequence spans 134 residues: Arsenate reductase (134 aa).

Residues C11, C83, and C90 each act as nucleophile in the active site. Cystine bridges form between C11-C83 and C83-C90.

This sequence belongs to the low molecular weight phosphotyrosine protein phosphatase family. Thioredoxin-coupled ArsC subfamily.

It localises to the cytoplasm. It carries out the reaction arsenate + [thioredoxin]-dithiol + H(+) = arsenite + [thioredoxin]-disulfide + H2O. In terms of biological role, catalyzes the reduction of arsenate [As(V)] to arsenite [As(III)]. The sequence is that of Arsenate reductase from Bacillus cereus (strain Q1).